The chain runs to 203 residues: Holliday junction branch migration complex subunit RuvA (203 aa).

The interval Met-1–Leu-63 is domain I. A domain II region spans residues Thr-64–Lys-142. The flexible linker stretch occupies residues Asp-143–Asn-149. The domain III stretch occupies residues Ile-150–Leu-203.

This sequence belongs to the RuvA family. Homotetramer. Forms an RuvA(8)-RuvB(12)-Holliday junction (HJ) complex. HJ DNA is sandwiched between 2 RuvA tetramers; dsDNA enters through RuvA and exits via RuvB. An RuvB hexamer assembles on each DNA strand where it exits the tetramer. Each RuvB hexamer is contacted by two RuvA subunits (via domain III) on 2 adjacent RuvB subunits; this complex drives branch migration. In the full resolvosome a probable DNA-RuvA(4)-RuvB(12)-RuvC(2) complex forms which resolves the HJ.

It is found in the cytoplasm. The RuvA-RuvB-RuvC complex processes Holliday junction (HJ) DNA during genetic recombination and DNA repair, while the RuvA-RuvB complex plays an important role in the rescue of blocked DNA replication forks via replication fork reversal (RFR). RuvA specifically binds to HJ cruciform DNA, conferring on it an open structure. The RuvB hexamer acts as an ATP-dependent pump, pulling dsDNA into and through the RuvAB complex. HJ branch migration allows RuvC to scan DNA until it finds its consensus sequence, where it cleaves and resolves the cruciform DNA. This is Holliday junction branch migration complex subunit RuvA from Rickettsia felis (strain ATCC VR-1525 / URRWXCal2) (Rickettsia azadi).